The following is a 23-amino-acid chain: Basic phospholipase A2 Smb-N6 (23 aa).

Belongs to the phospholipase A2 family. Group II subfamily. Ca(2+) serves as cofactor. In terms of processing, contains 7 disulfide bonds. In terms of tissue distribution, expressed by the venom gland.

It is found in the secreted. The catalysed reaction is a 1,2-diacyl-sn-glycero-3-phosphocholine + H2O = a 1-acyl-sn-glycero-3-phosphocholine + a fatty acid + H(+). Its function is as follows. Snake venom phospholipase A2 (PLA2) that shows myotoxic activities. PLA2 catalyzes the calcium-dependent hydrolysis of the 2-acyl groups in 3-sn-phosphoglycerides. The protein is Basic phospholipase A2 Smb-N6 of Sistrurus miliarius barbouri (Dusky pigmy rattlesnake).